The primary structure comprises 1653 residues: Protein strawberry notch (1653 aa).

Disordered stretches follow at residues 1-46 (MTSK…GRDL), 190-211 (GSPAARSSGNAGTTGSSQGGAI), 237-265 (GSNAPPPPPPSTAANSVRHSPTGGIPNPG), 317-345 (NNQKPPPIATTPGSGGPAGGAPGSGVKGN), and 883-1043 (SVAD…PSGS). The span at 11–36 (DADDDNDNFDEDDSGSDFDDDEDPDQ) shows a compositional bias: acidic residues. Phosphoserine is present on residues Ser-24 and Ser-26. A compositionally biased stretch (polar residues) spans 194-205 (ARSSGNAGTTGS). Positions 256–265 (SPTGGIPNPG) are enriched in low complexity. The span at 329–342 (GSGGPAGGAPGSGV) shows a compositional bias: gly residues. A compositionally biased stretch (low complexity) spans 883–901 (SVADSTSSLSNNSNITTAA). Phosphoserine occurs at positions 929 and 931. The segment covering 966–975 (IDDEDEDHDV) has biased composition (acidic residues). Residues 980 to 998 (RSVASDASSDFNPFFSGSD) are compositionally biased toward polar residues. A compositionally biased stretch (basic residues) spans 1008–1027 (RSKKSKKAQKKSKKKVKKEK). A coiled-coil region spans residues 1064-1125 (LSTQDKIQDL…RKIERLGARL (62 aa)).

This sequence belongs to the SBNO family. Interacts with vg for function in the wing disk. Interacts with Su(H) for function in the eye disk. As to expression, at stage 8, when the formation of the midline precursor cells depends on Notch signaling, high level of expression is seen in the midline precursor cells and a lower level in the surrounding epidermal cells. Between stages 11 and 14, expression is uniform throughout the epidermis, and at stage 16, high level of expression is restricted to the central nervous system. Expressed in the larval leg, wing and eye imaginal disks. Expression is over the wing disk and accumulates within the pleural region.

It localises to the nucleus. In terms of biological role, notch pathway component, may contribute to the specificity between lateral and inductive Notch signaling pathways in the wing disk. Required during many developmental stages including oogenesis, embryogenesis and imaginal development of the eye, wing and leg. Ebi and sno regulate EGFR-dependent Delta transcription in the developing eye, by antagonizing a repressor function of Suppressor of Hairless (Su(H)). They are required in the R-cells for normal cone cell development. This Drosophila melanogaster (Fruit fly) protein is Protein strawberry notch.